Reading from the N-terminus, the 452-residue chain is Ribosomal protein uS12 methylthiotransferase RimO (452 aa).

The MTTase N-terminal domain occupies 5 to 116; the sequence is PTIAFSHLGC…IVDVLQRTES (112 aa). Positions 14, 50, 79, 154, 158, and 161 each coordinate [4Fe-4S] cluster. Positions 140–369 constitute a Radical SAM core domain; that stretch reads TTTSAVAYLR…MATQQPIAER (230 aa). The TRAM domain occupies 372-438; sequence RAQIGRLVDV…IYDLHGEVAS (67 aa).

It belongs to the methylthiotransferase family. RimO subfamily. The cofactor is [4Fe-4S] cluster.

The protein resides in the cytoplasm. The enzyme catalyses L-aspartate(89)-[ribosomal protein uS12]-hydrogen + (sulfur carrier)-SH + AH2 + 2 S-adenosyl-L-methionine = 3-methylsulfanyl-L-aspartate(89)-[ribosomal protein uS12]-hydrogen + (sulfur carrier)-H + 5'-deoxyadenosine + L-methionine + A + S-adenosyl-L-homocysteine + 2 H(+). Catalyzes the methylthiolation of an aspartic acid residue of ribosomal protein uS12. The polypeptide is Ribosomal protein uS12 methylthiotransferase RimO (Synechococcus sp. (strain ATCC 27144 / PCC 6301 / SAUG 1402/1) (Anacystis nidulans)).